We begin with the raw amino-acid sequence, 316 residues long: Large ribosomal subunit protein uL10 (316 aa).

The segment at 282–316 (ASAAKADEPKKEEAKKVEEEEEEEEDGFMGFGMFD) is disordered. Basic and acidic residues predominate over residues 286-299 (KADEPKKEEAKKVE).

The protein belongs to the universal ribosomal protein uL10 family. P0 forms a pentameric complex by interaction with dimers of P1 and P2. Post-translationally, phosphorylated.

In terms of biological role, ribosomal protein P0 is the functional equivalent of E.coli protein L10. This Plasmodium falciparum (isolate 7G8) protein is Large ribosomal subunit protein uL10 (RPLP0).